The following is a 122-amino-acid chain: Large ribosomal subunit protein uL18 (122 aa).

This sequence belongs to the universal ribosomal protein uL18 family. As to quaternary structure, part of the 50S ribosomal subunit; part of the 5S rRNA/L5/L18/L25 subcomplex. Contacts the 5S and 23S rRNAs.

This is one of the proteins that bind and probably mediate the attachment of the 5S RNA into the large ribosomal subunit, where it forms part of the central protuberance. This Synechococcus sp. (strain JA-3-3Ab) (Cyanobacteria bacterium Yellowstone A-Prime) protein is Large ribosomal subunit protein uL18.